The sequence spans 75 residues: Cytochrome c oxidase assembly factor 5 (75 aa).

The 39-residue stretch at Q28–R66 folds into the CHCH domain. The Cx10C motif signature appears at C31 to C42. 2 disulfides stabilise this stretch: C31-C58 and C42-C48. The Cx9C motif signature appears at C48 to C58.

It belongs to the PET191 family.

Functionally, involved in an early step of the mitochondrial complex IV assembly process. The sequence is that of Cytochrome c oxidase assembly factor 5 (coa5) from Xenopus laevis (African clawed frog).